Reading from the N-terminus, the 78-residue chain is Mitochondrial import inner membrane translocase subunit Tim9 (78 aa).

Residues 24 to 48 carry the Twin CX3C motif motif; that stretch reads CFTSCVNEFGSRTVNAKEESCANNC. 2 cysteine pairs are disulfide-bonded: cysteine 24–cysteine 48 and cysteine 28–cysteine 44.

The protein belongs to the small Tim family. Heterohexamer; composed of 3 copies of tim-9/tin-9.1 and 3 copies of tim-10/tin-10, named soluble 70 kDa complex. The complex associates with the tim-22 component of the TIM22 complex. Interacts with multi-pass transmembrane proteins in transit.

It is found in the mitochondrion inner membrane. Its function is as follows. Mitochondrial intermembrane chaperone that participates in the import and insertion of multi-pass transmembrane proteins into the mitochondrial inner membrane. May also be required for the transfer of beta-barrel precursors from the TOM complex to the sorting and assembly machinery (SAM complex) of the outer membrane. Acts as a chaperone-like protein that protects the hydrophobic precursors from aggregation and guide them through the mitochondrial intermembrane space. The chain is Mitochondrial import inner membrane translocase subunit Tim9 (tin-9.1) from Caenorhabditis briggsae.